Reading from the N-terminus, the 227-residue chain is ATP-dependent dethiobiotin synthetase BioD (227 aa).

13–18 (DIGKTY) contributes to the ATP binding site. Residue Thr17 participates in Mg(2+) binding. Residue Lys38 is part of the active site. Ser42 is a binding site for substrate. ATP is bound by residues Asp55, 116-119 (EGSG), and 179-180 (NN). Residues Asp55 and Glu116 each coordinate Mg(2+).

It belongs to the dethiobiotin synthetase family. In terms of assembly, homodimer. It depends on Mg(2+) as a cofactor.

It localises to the cytoplasm. It catalyses the reaction (7R,8S)-7,8-diammoniononanoate + CO2 + ATP = (4R,5S)-dethiobiotin + ADP + phosphate + 3 H(+). Its pathway is cofactor biosynthesis; biotin biosynthesis; biotin from 7,8-diaminononanoate: step 1/2. In terms of biological role, catalyzes a mechanistically unusual reaction, the ATP-dependent insertion of CO2 between the N7 and N8 nitrogen atoms of 7,8-diaminopelargonic acid (DAPA, also called 7,8-diammoniononanoate) to form a ureido ring. This is ATP-dependent dethiobiotin synthetase BioD from Clostridium botulinum (strain Langeland / NCTC 10281 / Type F).